A 224-amino-acid chain; its full sequence is UPF0173 metal-dependent hydrolase EAT1b_0495 (224 aa).

This sequence belongs to the UPF0173 family.

In Exiguobacterium sp. (strain ATCC BAA-1283 / AT1b), this protein is UPF0173 metal-dependent hydrolase EAT1b_0495.